The chain runs to 71 residues: MSKQTKTFEENLAELEGIVTKLERGDVALEEALAEFQKGMVLSKDLQKTLAEAEKTLVKVMQADGSEAEMD.

Belongs to the XseB family. As to quaternary structure, heterooligomer composed of large and small subunits.

The protein localises to the cytoplasm. The catalysed reaction is Exonucleolytic cleavage in either 5'- to 3'- or 3'- to 5'-direction to yield nucleoside 5'-phosphates.. Bidirectionally degrades single-stranded DNA into large acid-insoluble oligonucleotides, which are then degraded further into small acid-soluble oligonucleotides. This chain is Exodeoxyribonuclease 7 small subunit, found in Streptococcus suis (strain 98HAH33).